Reading from the N-terminus, the 427-residue chain is Trigger factor (427 aa).

Residues 163–248 (GDTVVIDFVG…IHEVKAKEVP (86 aa)) enclose the PPIase FKBP-type domain.

It belongs to the FKBP-type PPIase family. Tig subfamily.

Its subcellular location is the cytoplasm. It carries out the reaction [protein]-peptidylproline (omega=180) = [protein]-peptidylproline (omega=0). Functionally, involved in protein export. Acts as a chaperone by maintaining the newly synthesized protein in an open conformation. Functions as a peptidyl-prolyl cis-trans isomerase. This chain is Trigger factor, found in Streptococcus pneumoniae (strain ATCC 700669 / Spain 23F-1).